The following is a 3210-amino-acid chain: MSNMAPLPTMGVEQQALSLSCPLLPHDDEKHSDNLYEQATRHFGLSRDKIENVLPCTSFQCDVIDCAVDDRRHAIGHVVYDIPNTVDIQRLAAAWKEVVRQTPILRTGIFTSETGDSFQIVLKEGCLPWMYATCLGMKGAVIQDEAVAAMTGPRCNRYVVLEDPSTKQRLLIWTFSHALVDYTVQERILQRVLTVYDGRDVECPRIKDTEHVSRFWQQHFEGLDASVFPLLPSHLTVCNPNARAEHHISYTGPVQRKWSHTSICRAALAVLLSRFTHSSEALFGVVTEQSHNSEDQRRSIDGPARTVVPIRVLCAPDQYVSDVIGAITAHEHAMRGFEHAGLRNIRRTGDDGSAACGFQTVLLVTDGDAPKTPGSVLHRSVEESDRFMPCANRALLLDCQMAGNSASLVARYDHNVIDPRQMSRFLRQLGYLIQQFHHHVDLPLVKELDVVTAEDCAEIEKWNSERLTMQDALIHDTISKWAAGDPNKAAVFAWDGEWTYAELDNISSRLAVYIQSLDLRPGQAILPLCFEKSKWVVATILAVLKVGRAFTLIDPCDPSARMAQVCQQTSATVALTSKLHNTTLRSVVSRCIVVDDDLLRSLPHADGRLKATVKPQDLAYVIFTSGSTGEPKGIMIEHRGFVSCAMKFGPALGMDEHTRALQFASYAFGACLVEVVTALMHGGCVCIPSDDDRLNNVPEFIKRAQVNWVILTPSYIGTFQPEDVPGLQTLVLVGEPISASIRDTWASQVRLLNAYGQSESSTMCSVTEVSPLSLEPNNIGRAVGARSWIIDPDEPDRLAPIGCIGELVIESPGIARDYIIAPPPDKSPFLLAPPAWYPAGKLSNAFKFYKTGDLVRYGPDGTIVCLGRKDSQVKIRGQRVEISAVEASLRRQLPSDIMPVAEAIKRSDSSGSTVLTAFLIGSSKSGDGNGHALSAADAVILDHGATNEINAKLQQILPQHSVPSYYIHMENLPRTATGKADRKMLRSIASKLLGELSQNVTSQPIEKHDAPATGIEVKLKELWFLSLNLNPNSQDVGASFFDLGGNSIIAIKMVNMARSAGIALKVSDIFQNPTLAGLVDVIGRDPAPYNLIPTTAYSGPVEQSFAQGRLWFLDQIELDALWYLLPYAVRMRGPLHIDALTIALLAIQQRHETLRTTFEEQDGVGVQVVHASPISDLRIIDVSGDRNSDYLQLLHQEQTTPFILACQAGWRVSLIRLGEDDHILSIVMHHIISDGWSIDILRRELSNFYSAALRGSDPLSVVSPLPLHYRDFSVWQKQVEQETEHERQLEYWVKQLADSSAAEFLTDFPRPNILSGEAGSVPVTIEGELYERLQEFCKVEQMTPFAVLLGAFRATHYRLTGAEDSIIGTPIANRNRQELENMIGFFVNTQCMRITVDGDDTFESLVRQVRTTATAAFEHQDVPFERVVTALLPRSRDLSRNPLAQLTFALHSQQDLGKFELEGLVAEPVSNKVYTRFDVEFHLFQEAGRLSGNVAFAADLFKPETISNVVAIFFQILRQGIRQPRTPIAVLPLTDGLADLRAMGLLEIEKAEYPRESSVVDVFRKQVAAHPHAFAVVDSASRLTYADLDRQSDQLATWLGRRNMTAETLVGVLAPRSCQTVVAILGILKANLAYLPLDVNCPTARLQTILSTLNRHKLVLLGSNATTPDVQIPDVELVRISDILDRPINGQAKLNGHTKSNGYSKPNGYTHLKGYSNLNGYSKQNGYAQLNGHRERNNYLDLNGHSLLNGNSDITTSGPSATSLAYVIFTSGSTGKPKGVMVEHRSIIRLAKKNRIISRFPSVAKVAHLSNIAFDAATWEMFAALLNGGTLVCIDYMTTLDSKTLEAAFAREQINAALLTPALLKQCLANIPTTLGRLSALVIGGDRLDGQDAIAAHALVGAGVYNAYGPTENGVISTIYNITKNDSFINGVPIGCAISNSGAYITDPDQQLVPPGVMGELVVTGDGLARGYTDPALDAGRFVQIMINDKAVRAYRTGDRARYRVGDGQIEFFGRMDQQVKIRGHRIEPAEVERAILDQDSARDAVVVIRHQEGEEPEMVGFVATHGDHSAEQEEADDQVEGWKDFFESNTYADMDTIGQSAIGNDFTGWTSMYDGSEINKAEMQEWLDDTMRTLLDGQAPGHVLEIGTGSGMVLFNLGAGLQSYVGLEPSRSAATFVTKAINSTPALAGKAEVHVGTATDINRLRGLRPDLVVLNSVVQYFPTPEYLLEVVESLVRIPGVKRVVFGDIRSHATNRHFLAARALHSLGSKATKDAIRQKMTEMEEREEELLVDPAFFTALLQGQLADRIKHVEILPKNMRATNELSAYRYTAVIHVRGPEEQSRPVYPIQVNDWIDFQASRIDRRALLRLLQRSADAATVAVSNIPYSKTIVERHVVESLDNNNRENTHRAPDGAAWISAVRSKAERCTSLSVTDLVQLGEEAGFRVEVSAARQWSQSGALDAVFHRYNLPTQSNSRVLIQFPTEDGQTRRSATLTNRPLQRLQSRRFASQIREQLKAVLPSYMIPSRIVVIDQMPLNANGKVDRKELTRRAQIAPKSQAAPAKPVKQVDPFVNLEAILCEEFAEVLGMEVGVNDHFFQLGGHSLLATKLVARLSRRLNGRVSVRDVFDQPVISDLAVTLRQGLTLENAIPATPDSGYWEQTMSAPTTPSDDMEAVLCKEFADVLGVEVSATDSFFDLGGHSLMATKLAARISRRLDVPVSIKDIFDHSVPLNLARKIRLTQAKGHEATNGVQIANDAPFQLISVEDPEIFVQREIAPQLQCSPETILDVYPATQMQRVFLLNPVTGKPRSPTPFHIDFPPDADCASLMRACASLAKHFDIFRTVFLEARGELYQVVLKHVDVPIEMLQTEENINSATRSFLDVDAEKPIRLGQPLIRIAILEKPGSTLRVILRLSHALYDGLSLEHILHSLHILFFGGSLPPPPKFAGYMQHVASSRREGYDFWRSVLRDSSMTVIKGNNNTTPPPPPQQQSTPSGAHHASKVVTIPTQANTDSRITRATIFTTACALMLAKEDNSSDVVFGRTVSGRQGLPLAHQNVIGPCLNQVPVRARGLNRGTTHHRELLREMQEQYLNSLAFETLGYDEIKAHCTDWPDVPATASFGCCIVYQNFDSHPDSRVEEQRLQIGVLSRNYEAINEGLVHDLVIAGESEPDGDDLRVTVVANRRLCDEERLKRMLEELCGNIRALALV.

Residues 68-454 (VDDRRHAIGH…VKELDVVTAE (387 aa)) are condensation 1. An adenylation 1 region spans residues 483 to 876 (AGDPNKAAVF…GRKDSQVKIR (394 aa)). One can recognise a Carrier 1 domain in the interval 1010–1086 (APATGIEVKL…GLVDVIGRDP (77 aa)). O-(pantetheine 4'-phosphoryl)serine is present on Ser-1047. The condensation 2 stretch occupies residues 1104–1534 (SFAQGRLWFL…RTPIAVLPLT (431 aa)). The interval 1563-2023 (FRKQVAAHPH…GRMDQQVKIR (461 aa)) is adenylation 2. The tract at residues 2081–2236 (EGWKDFFESN…YLLEVVESLV (156 aa)) is S-adenosyl-L-methionine-dependent N-methyltransferase. Carrier domains lie at 2570-2644 (DPFV…RQGL) and 2668-2742 (TPSD…RLTQ). Ser-2604 and Ser-2702 each carry O-(pantetheine 4'-phosphoryl)serine. The segment at 2788 to 3203 (LDVYPATQMQ…KRMLEELCGN (416 aa)) is condensation 3. The disordered stretch occupies residues 2976-3002 (VIKGNNNTTPPPPPQQQSTPSGAHHAS).

It belongs to the NRP synthetase family. The cofactor is pantetheine 4'-phosphate.

It carries out the reaction 2 (R)-3-phenyllactate + 2 (R)-lactate + 4 L-leucine + 4 S-adenosyl-L-methionine + 8 ATP = PF1022A + 8 AMP + 4 S-adenosyl-L-homocysteine + 8 diphosphate + 8 H(+). It catalyses the reaction 4 (R)-3-phenyllactate + 4 L-leucine + 4 S-adenosyl-L-methionine + 8 ATP = PF1022B + 8 AMP + 4 S-adenosyl-L-homocysteine + 8 diphosphate + 8 H(+). The catalysed reaction is 3 (R)-3-phenyllactate + (R)-lactate + 4 L-leucine + 4 S-adenosyl-L-methionine + 8 ATP = PF1022C + 8 AMP + 4 S-adenosyl-L-homocysteine + 8 diphosphate + 8 H(+). The enzyme catalyses (R)-3-phenyllactate + 3 (R)-lactate + 4 L-leucine + 4 S-adenosyl-L-methionine + 8 ATP = PF1022D + 8 AMP + 4 S-adenosyl-L-homocysteine + 8 diphosphate + 8 H(+). It carries out the reaction 4 (R)-lactate + 4 L-leucine + 4 S-adenosyl-L-methionine + 8 ATP = PF1022F + 8 AMP + 4 S-adenosyl-L-homocysteine + 8 diphosphate + 8 H(+). Functionally, nonribosomal peptide synthetase that synthesizes cyclooctadepsipeptides (CODPs) PF 1022 that show powerful broad-spectrum anthelmintic activity with low toxicity in animals. Couples 4 N-methyl-L-leucines and a varying content of alpha-D-hydroxy acids (D-lactates or D-phenyllactates) in an alternative fashion. The enzyme is capable of synthesizing all known natural cyclooctadepsipeptides of the PF1022 type differing in the content of D-lactate and D-phenyllactate, using from 4 D-lactates (PF 1022F) to 4 D-phenyllactates (PF 1022B), respectively. The formation of different PF-related compounds is mainly controlled by the molar ratio of the hydroxy acids. N-methylation of the substrate L-leucine takes place after covalent binding prior to peptide bond formation. In Rosellinia sp. (Mycelia sterilia), this protein is PF 1022-synthetase.